A 329-amino-acid chain; its full sequence is Large ribosomal subunit protein uL3 (329 aa).

This sequence belongs to the universal ribosomal protein uL3 family. Part of the 50S ribosomal subunit. Forms a cluster with proteins L14 and L24e.

One of the primary rRNA binding proteins, it binds directly near the 3'-end of the 23S rRNA, where it nucleates assembly of the 50S subunit. This Picrophilus torridus (strain ATCC 700027 / DSM 9790 / JCM 10055 / NBRC 100828 / KAW 2/3) protein is Large ribosomal subunit protein uL3.